The following is a 103-amino-acid chain: Hexon-interlacing protein (103 aa).

The segment at 25 to 45 (RQNVTGSDLGGKPVPSDVLES) is disordered. Positions 72–99 (LDDLKTQVAAMQNSVTAIQEELKDLKQR) form a coiled coil.

Belongs to the adenoviridae hexon-interlacing protein family. In terms of assembly, homotrimer. Interacts with hexon protein; this interaction tethers the hexons together. Self-interacts with adjacent proteins. Interacts with kinesin light chain KLC1; this interaction leads to capsid disruption at the nuclear pore complex during virus entry into host cell.

The protein resides in the virion. It localises to the host nucleus. Structural component of the virion that acts as a cement protein on the capsid exterior and forms triskelion structures consisting of three molecules that stabilize three hexon trimers at the center of each icosahedral facet and fixes the peripentonal hexons. Dispensable for assembly. During virus entry, recruits the anterograde motor kinesin-1 to the capsid docked at the nuclear pore complex thereby subjecting the docked capsid to a pulling force. The resulting tension leads to capsid disruption, dispersion of capsid fragments toward cell periphery and eventually viral DNA entry into the host nucleus. The sequence is that of Hexon-interlacing protein from Canine adenovirus serotype 1 (strain CLL) (CAdV-1).